We begin with the raw amino-acid sequence, 307 residues long: Cyclin-dependent kinase 5 activator 1 (307 aa).

Phosphoserine; by CDK5 is present on Ser-8. Residues 96-136 are disordered; sequence STFAQPPPAQPPAPPANQLSGSQTGVSSSVKKAPHPSVTSA. The segment covering 100-110 has biased composition (pro residues); it reads QPPPAQPPAPP. Over residues 112 to 125 the composition is skewed to polar residues; the sequence is NQLSGSQTGVSSSV. The residue at position 138 (Thr-138) is a Phosphothreonine; by CDK5.

The protein belongs to the cyclin-dependent kinase 5 activator family. In terms of assembly, heterodimer composed of a catalytic subunit CDK5 and a regulatory subunit CDK5R1 (p25) and macromolecular complex composed of at least CDK5, CDK5R1 (p35) and CDK5RAP1 or CDK5RAP2 or CDK5RAP3. Only the heterodimer shows kinase activity. Interacts with EPHA4 and NGEF; may mediate the activation of NGEF by EPHA4. Interacts with RASGRF2. The complex p35/CDK5 interacts with CLOCK. Post-translationally, the p35 form is proteolytically cleaved by calpain, giving rise to the p25 form. P35 has a 5 to 10 fold shorter half-life compared to p25. The conversion results in deregulation of the CDK5 kinase: p25/CDK5 kinase displays an increased and altered tau phosphorylation in comparison to the p35/CDK5 kinase in vivo. Myristoylated. A proper myristoylation signal is essential for the proper distribution of p35. In terms of processing, phosphorylation at Ser-8 and Thr-138 by CDK5 prevents calpain-mediated proteolysis. Post-translationally, ubiquitinated, leading to its degradation: degradation of p35 by proteasome results in down-regulation of CDK5 activity. During this process, CDK5 phosphorylates p35 and induces its ubiquitination and subsequent degradation. Ubiquitinated by the CRL2(FEM1B) complex, which recognizes the -Gly-Leu-Asp-Arg C-degron at the C-terminus, leading to its degradation. Brain and neuron specific.

The protein resides in the cell membrane. It is found in the cell projection. It localises to the neuron projection. Its subcellular location is the nucleus. The protein localises to the cytoplasm. The protein resides in the perinuclear region. It is found in the perikaryon. In terms of biological role, p35 is a neuron specific activator of CDK5. The complex p35/CDK5 is required for neurite outgrowth and cortical lamination. Involved in dendritic spine morphogenesis by mediating the EFNA1-EPHA4 signaling. Activator of TPKII. The complex p35/CDK5 participates in the regulation of the circadian clock by modulating the function of CLOCK protein: phosphorylates CLOCK at 'Thr-451' and 'Thr-461' and regulates the transcriptional activity of the CLOCK-BMAL1 heterodimer in association with altered stability and subcellular distribution. This Spermophilus citellus (European ground squirrel) protein is Cyclin-dependent kinase 5 activator 1 (CDK5R1).